We begin with the raw amino-acid sequence, 260 residues long: Indole-3-glycerol phosphate synthase (260 aa).

This sequence belongs to the TrpC family.

The catalysed reaction is 1-(2-carboxyphenylamino)-1-deoxy-D-ribulose 5-phosphate + H(+) = (1S,2R)-1-C-(indol-3-yl)glycerol 3-phosphate + CO2 + H2O. Its pathway is amino-acid biosynthesis; L-tryptophan biosynthesis; L-tryptophan from chorismate: step 4/5. In Staphylococcus saprophyticus subsp. saprophyticus (strain ATCC 15305 / DSM 20229 / NCIMB 8711 / NCTC 7292 / S-41), this protein is Indole-3-glycerol phosphate synthase.